A 174-amino-acid polypeptide reads, in one-letter code: Peptide deformylase (174 aa).

The Fe cation site is built by Cys91 and His133. The active site involves Glu134. His137 is a binding site for Fe cation.

This sequence belongs to the polypeptide deformylase family. Fe(2+) serves as cofactor.

The enzyme catalyses N-terminal N-formyl-L-methionyl-[peptide] + H2O = N-terminal L-methionyl-[peptide] + formate. Functionally, removes the formyl group from the N-terminal Met of newly synthesized proteins. Requires at least a dipeptide for an efficient rate of reaction. N-terminal L-methionine is a prerequisite for activity but the enzyme has broad specificity at other positions. The chain is Peptide deformylase from Fusobacterium nucleatum subsp. nucleatum (strain ATCC 25586 / DSM 15643 / BCRC 10681 / CIP 101130 / JCM 8532 / KCTC 2640 / LMG 13131 / VPI 4355).